A 169-amino-acid chain; its full sequence is Calfumirin-1 (169 aa).

4 consecutive EF-hand domains span residues 6 to 41 (NIVE…KKAF), 42 to 77 (NPER…DKAL), 93 to 128 (EVEE…TGAK), and 129 to 164 (DPEK…VQKL). The Ca(2+) site is built by D19, N21, D23, E25, E30, D55, D57, D59, K61, E66, D108, N110, D112, E117, D142, N144, D146, T148, and E153.

Functionally, may be involved in the phase-shift of cells from growth to differentiation. This is Calfumirin-1 (cafA) from Dictyostelium discoideum (Social amoeba).